We begin with the raw amino-acid sequence, 340 residues long: Adenine deaminase (340 aa).

Positions 17, 19, and 197 each coordinate Zn(2+). Residue Glu200 is the Proton donor of the active site. Asp278 contacts Zn(2+). Asp279 contacts substrate.

It belongs to the metallo-dependent hydrolases superfamily. Adenosine and AMP deaminases family. Adenine deaminase type 2 subfamily. Requires Zn(2+) as cofactor.

It catalyses the reaction adenine + H2O + H(+) = hypoxanthine + NH4(+). Functionally, catalyzes the hydrolytic deamination of adenine to hypoxanthine. Plays an important role in the purine salvage pathway and in nitrogen catabolism. This Streptomyces coelicolor (strain ATCC BAA-471 / A3(2) / M145) protein is Adenine deaminase.